A 349-amino-acid chain; its full sequence is Isopentenyl-diphosphate delta-isomerase (349 aa).

6–7 (RK) serves as a coordination point for substrate. Residues 62-64 (AMT), S93, and N122 contribute to the FMN site. Residue Q152 coordinates substrate. E153 lines the Mg(2+) pocket. Residues K184, T214, 258–259 (GG), and 280–281 (AG) contribute to the FMN site.

This sequence belongs to the IPP isomerase type 2 family. As to quaternary structure, homooctamer. Dimer of tetramers. It depends on FMN as a cofactor. NADPH serves as cofactor. Requires Mg(2+) as cofactor.

The protein localises to the cytoplasm. The catalysed reaction is isopentenyl diphosphate = dimethylallyl diphosphate. Functionally, involved in the biosynthesis of isoprenoids. Catalyzes the 1,3-allylic rearrangement of the homoallylic substrate isopentenyl (IPP) to its allylic isomer, dimethylallyl diphosphate (DMAPP). The polypeptide is Isopentenyl-diphosphate delta-isomerase (Bacillus subtilis (strain 168)).